We begin with the raw amino-acid sequence, 369 residues long: MGQLKGLPVEDGFRMPGEYEPHIGCFMIWPERPDNWRLGGKPAQQNYKEVAVAISNFEPVTMFVSPNQYKNARKELPDTIRVIEMSNDDAWIRDYGPSFLVDDKGDMRGVDWGFNAWGGLLDGLYFPWDKDNQIAKKVCELERIDYYSQKDFILEGCSIHVDGEGTLVTTEECLLSEGRNPNLTKIEIEQTLKKYFHAQKVIWLKHGFYLDETNGHVDNIFNFVAPGEVVLSWTDNKSDPQYEISRECYDILANKTDAKGRTFIIHKLHCPDPVLITQTESEGVEAINGTFPRQAGDRLAASYVNYYTANGAIIFPLFDDPKDKDAQELLEKLYPDRKIVGIKAREILLGGGNIHCITQHLPDKSTIRE.

The Amidino-cysteine intermediate role is filled by Cys356.

This sequence belongs to the agmatine deiminase family.

It carries out the reaction agmatine + H2O = N-carbamoylputrescine + NH4(+). The chain is Putative agmatine deiminase 2 from Listeria monocytogenes serovar 1/2a (strain ATCC BAA-679 / EGD-e).